The following is a 430-amino-acid chain: 3-phosphoshikimate 1-carboxyvinyltransferase (430 aa).

The 3-phosphoshikimate site is built by Lys-20, Ser-21, and Arg-25. Lys-20 is a binding site for phosphoenolpyruvate. The phosphoenolpyruvate site is built by Gly-92 and Arg-120. 3-phosphoshikimate is bound by residues Ser-166, Gln-168, Asp-312, and Lys-339. Gln-168 contacts phosphoenolpyruvate. Asp-312 acts as the Proton acceptor in catalysis. Arg-343 and Arg-387 together coordinate phosphoenolpyruvate.

The protein belongs to the EPSP synthase family. In terms of assembly, monomer.

The protein localises to the cytoplasm. It catalyses the reaction 3-phosphoshikimate + phosphoenolpyruvate = 5-O-(1-carboxyvinyl)-3-phosphoshikimate + phosphate. The protein operates within metabolic intermediate biosynthesis; chorismate biosynthesis; chorismate from D-erythrose 4-phosphate and phosphoenolpyruvate: step 6/7. Functionally, catalyzes the transfer of the enolpyruvyl moiety of phosphoenolpyruvate (PEP) to the 5-hydroxyl of shikimate-3-phosphate (S3P) to produce enolpyruvyl shikimate-3-phosphate and inorganic phosphate. The polypeptide is 3-phosphoshikimate 1-carboxyvinyltransferase (Lactococcus lactis subsp. cremoris (strain SK11)).